The following is a 201-amino-acid chain: ATP-dependent Clp protease proteolytic subunit 1 (201 aa).

The active-site Nucleophile is Ser-102. His-127 is a catalytic residue.

This sequence belongs to the peptidase S14 family. Fourteen ClpP subunits assemble into 2 heptameric rings which stack back to back to give a disk-like structure with a central cavity, resembling the structure of eukaryotic proteasomes.

It localises to the cytoplasm. It catalyses the reaction Hydrolysis of proteins to small peptides in the presence of ATP and magnesium. alpha-casein is the usual test substrate. In the absence of ATP, only oligopeptides shorter than five residues are hydrolyzed (such as succinyl-Leu-Tyr-|-NHMec, and Leu-Tyr-Leu-|-Tyr-Trp, in which cleavage of the -Tyr-|-Leu- and -Tyr-|-Trp bonds also occurs).. In terms of biological role, cleaves peptides in various proteins in a process that requires ATP hydrolysis. Has a chymotrypsin-like activity. Plays a major role in the degradation of misfolded proteins. This is ATP-dependent Clp protease proteolytic subunit 1 from Mesorhizobium japonicum (strain LMG 29417 / CECT 9101 / MAFF 303099) (Mesorhizobium loti (strain MAFF 303099)).